The sequence spans 341 residues: S-adenosylmethionine:tRNA ribosyltransferase-isomerase (341 aa).

The protein belongs to the QueA family. In terms of assembly, monomer.

It is found in the cytoplasm. The catalysed reaction is 7-aminomethyl-7-carbaguanosine(34) in tRNA + S-adenosyl-L-methionine = epoxyqueuosine(34) in tRNA + adenine + L-methionine + 2 H(+). The protein operates within tRNA modification; tRNA-queuosine biosynthesis. Transfers and isomerizes the ribose moiety from AdoMet to the 7-aminomethyl group of 7-deazaguanine (preQ1-tRNA) to give epoxyqueuosine (oQ-tRNA). The sequence is that of S-adenosylmethionine:tRNA ribosyltransferase-isomerase from Chlorobium luteolum (strain DSM 273 / BCRC 81028 / 2530) (Pelodictyon luteolum).